The chain runs to 311 residues: HTH-type transcriptional regulator PcaQ (311 aa).

In terms of domain architecture, HTH lysR-type spans 6-63; that stretch reads IKFRHLQTFVEVARQKSVIRAAEILHVSQPAVTKTIRELEDVLGVSLLEREGRGIRIS. The H-T-H motif DNA-binding region spans 23-42; that stretch reads VIRAAEILHVSQPAVTKTIR.

It belongs to the LysR transcriptional regulatory family.

Functionally, activates transcription of the pcaDCHGB operon for the catabolism of the phenolic compound protocatechuate. The sequence is that of HTH-type transcriptional regulator PcaQ (pcaQ) from Agrobacterium fabrum (strain C58 / ATCC 33970) (Agrobacterium tumefaciens (strain C58)).